We begin with the raw amino-acid sequence, 449 residues long: Ribosomal protein uS12 methylthiotransferase RimO (449 aa).

One can recognise an MTTase N-terminal domain in the interval 7–123 (QKVSMVSLGC…VAEILAEHHA (117 aa)). Residues Cys-16, Cys-52, Cys-86, Cys-161, Cys-165, and Cys-168 each coordinate [4Fe-4S] cluster. One can recognise a Radical SAM core domain in the interval 147–377 (SSPGWYAYLK…MKTQARVSFR (231 aa)). The region spanning 380–448 (RAMVGQTEQV…DYDLVAEMIE (69 aa)) is the TRAM domain.

It belongs to the methylthiotransferase family. RimO subfamily. [4Fe-4S] cluster is required as a cofactor.

The protein localises to the cytoplasm. The enzyme catalyses L-aspartate(89)-[ribosomal protein uS12]-hydrogen + (sulfur carrier)-SH + AH2 + 2 S-adenosyl-L-methionine = 3-methylsulfanyl-L-aspartate(89)-[ribosomal protein uS12]-hydrogen + (sulfur carrier)-H + 5'-deoxyadenosine + L-methionine + A + S-adenosyl-L-homocysteine + 2 H(+). Its function is as follows. Catalyzes the methylthiolation of an aspartic acid residue of ribosomal protein uS12. In Trichlorobacter lovleyi (strain ATCC BAA-1151 / DSM 17278 / SZ) (Geobacter lovleyi), this protein is Ribosomal protein uS12 methylthiotransferase RimO.